A 206-amino-acid polypeptide reads, in one-letter code: Small ribosomal subunit protein uS4 (206 aa).

The region spanning 96–156 (CRLDNVVYRM…EKAKNQLRIV (61 aa)) is the S4 RNA-binding domain.

It belongs to the universal ribosomal protein uS4 family. Part of the 30S ribosomal subunit. Contacts protein S5. The interaction surface between S4 and S5 is involved in control of translational fidelity.

Its function is as follows. One of the primary rRNA binding proteins, it binds directly to 16S rRNA where it nucleates assembly of the body of the 30S subunit. With S5 and S12 plays an important role in translational accuracy. The chain is Small ribosomal subunit protein uS4 from Pseudomonas fluorescens (strain SBW25).